The chain runs to 636 residues: MTCAALLFRDTRSVPEKINLKVDGTLPSTMNLARNFSIIAHIDHGKSTLADKLLELTGTVQKREMKQQFLDNMDLERERGITIKLQAARMRYIMNDEPYCLNLIDTPGHVDFSYEVSRSLAACEGALLVVDASQGVEAQTLANVYLALENDLEIIPVLNKIDLPGAEPDRVAQEIEEIIGMDCSNAIRCSAKEGIGITEILDAIVTKIPPPQNTAISPLRALIFDSYYDPYRGVIVYFRVVDGSIKKGDKICFMASGKEYVADEIGVLSPNQMQVSELYAGEVGYLSASIRSVADARVGDTITHSSKRAECALPGYSQATPMVFCGLFPIDADQFEELREALEKLQLNDAALKAVTRFSMQFEPESSSAMGFGFRCGFLGLLHMEIVQERLEREYNLNLIITAPSVVYHVNLADGETVECSNPSLLPEPGKRRSIEEPYVKIDMLTPKEYIGPIMELGQERRGEFKEMNFITENRASVVYELPLAEMVGDFFDQLKSRSKGYASMEYSLIGYRESNLVKLDIQINGDPVEALSTIVHRDKAYSVGRALTQKLKELIPRQMFRVPIQACIGAKVIASEALSAIRKDVLSKCYGGDISRKKKLLKKQAEGKKRMKAIGRVDVPQEAFMAVLKLEKEVL.

Residues 31-212 enclose the tr-type G domain; the sequence is NLARNFSIIA…AIVTKIPPPQ (182 aa). Residues 40 to 47, 105 to 109, and 159 to 162 contribute to the GTP site; these read AHIDHGKS, DTPGH, and NKID.

The protein belongs to the TRAFAC class translation factor GTPase superfamily. Classic translation factor GTPase family. LepA subfamily.

It is found in the plastid. The protein localises to the chloroplast. It carries out the reaction GTP + H2O = GDP + phosphate + H(+). Promotes chloroplast protein synthesis. May act as a fidelity factor of the translation reaction, by catalyzing a one-codon backward translocation of tRNAs on improperly translocated ribosomes. The polypeptide is Translation factor GUF1 homolog, chloroplastic (Oryza sativa subsp. indica (Rice)).